We begin with the raw amino-acid sequence, 81 residues long: MAGSTEERPFSDIITSIRYWVIHSITIPSLFVSGWLFVSTGLAYDVFGTPRPNEYFTEDRQDIPLITDRFNALEQLNQYTK.

Residues 21 to 35 (VIHSITIPSLFVSGW) form a helical membrane-spanning segment. Histidine 23 lines the heme pocket.

The protein belongs to the PsbE/PsbF family. As to quaternary structure, heterodimer of an alpha subunit and a beta subunit. PSII is composed of 1 copy each of membrane proteins PsbA, PsbB, PsbC, PsbD, PsbE, PsbF, PsbH, PsbI, PsbJ, PsbK, PsbL, PsbM, PsbT, PsbX, PsbY, PsbZ, Psb30/Ycf12, at least 3 peripheral proteins of the oxygen-evolving complex and a large number of cofactors. It forms dimeric complexes. Heme b serves as cofactor.

It localises to the plastid. Its subcellular location is the chloroplast thylakoid membrane. In terms of biological role, this b-type cytochrome is tightly associated with the reaction center of photosystem II (PSII). PSII is a light-driven water:plastoquinone oxidoreductase that uses light energy to abstract electrons from H(2)O, generating O(2) and a proton gradient subsequently used for ATP formation. It consists of a core antenna complex that captures photons, and an electron transfer chain that converts photonic excitation into a charge separation. This is Cytochrome b559 subunit alpha from Mesostigma viride (Green alga).